Here is a 387-residue protein sequence, read N- to C-terminus: Alpha-maltose-1-phosphate synthase (387 aa).

This sequence belongs to the glycosyltransferase group 1 family.

The enzyme catalyses ADP-alpha-D-glucose + alpha-D-glucose 1-phosphate = alpha-maltose 1-phosphate + ADP + H(+). Its pathway is capsule biogenesis; capsule polysaccharide biosynthesis. It functions in the pathway glycan biosynthesis; glycogen biosynthesis. In terms of biological role, involved in the biosynthesis of the maltose-1-phosphate (M1P) building block required for alpha-glucan production by the key enzyme GlgE. Catalyzes the formation of an alpha-1,4 linkage between glucose from ADP-glucose and glucose 1-phosphate (G1P) to yield maltose-1-phosphate (M1P). This chain is Alpha-maltose-1-phosphate synthase, found in Mycobacterium tuberculosis (strain CDC 1551 / Oshkosh).